The primary structure comprises 68 residues: DNA-directed RNA polymerase subunit omega (68 aa).

Belongs to the RNA polymerase subunit omega family. The RNAP catalytic core consists of 2 alpha, 1 beta, 1 beta' and 1 omega subunit. When a sigma factor is associated with the core the holoenzyme is formed, which can initiate transcription.

It catalyses the reaction RNA(n) + a ribonucleoside 5'-triphosphate = RNA(n+1) + diphosphate. In terms of biological role, promotes RNA polymerase assembly. Latches the N- and C-terminal regions of the beta' subunit thereby facilitating its interaction with the beta and alpha subunits. The polypeptide is DNA-directed RNA polymerase subunit omega (Brevibacillus brevis (strain 47 / JCM 6285 / NBRC 100599)).